We begin with the raw amino-acid sequence, 79 residues long: Conotoxin VnMKLT1-01122 (79 aa).

An N-terminal signal peptide occupies residues 1–22; the sequence is MKLTCMKIVAVLFLTAWTFVTA. The propeptide occupies 23 to 48; sequence DDSRNGLEYLFPKAHYEMNPEASKLN. The residue at position 51 (Gln-51) is a Pyrrolidone carboxylic acid. Intrachain disulfides connect Cys-53-Cys-70, Cys-60-Cys-74, and Cys-69-Cys-78.

Belongs to the conotoxin O1 superfamily. As to expression, expressed by the venom duct.

Its subcellular location is the secreted. The chain is Conotoxin VnMKLT1-01122 from Conus ventricosus (Mediterranean cone).